A 190-amino-acid polypeptide reads, in one-letter code: UPF0149 protein NT01EI_3357 (190 aa).

This sequence belongs to the UPF0149 family.

This Edwardsiella ictaluri (strain 93-146) protein is UPF0149 protein NT01EI_3357.